Consider the following 121-residue polypeptide: Cell division protein FtsB (121 aa).

The Cytoplasmic portion of the chain corresponds to Met-1–Trp-6. A helical transmembrane segment spans residues Leu-7–Phe-24. The Periplasmic segment spans residues Gly-25–Pro-121. Residues Glu-31–Gly-66 adopt a coiled-coil conformation. The tract at residues Pro-98–Pro-121 is disordered.

It belongs to the FtsB family. Part of a complex composed of FtsB, FtsL and FtsQ.

The protein resides in the cell inner membrane. Essential cell division protein. May link together the upstream cell division proteins, which are predominantly cytoplasmic, with the downstream cell division proteins, which are predominantly periplasmic. The polypeptide is Cell division protein FtsB (Xanthomonas campestris pv. campestris (strain 8004)).